The chain runs to 331 residues: Anthranilate phosphoribosyltransferase (331 aa).

Residues glycine 79, glycine 82–aspartate 83, serine 87, asparagine 89–threonine 92, lysine 107–serine 115, and serine 119 contribute to the 5-phospho-alpha-D-ribose 1-diphosphate site. Residue glycine 79 coordinates anthranilate. Serine 91 lines the Mg(2+) pocket. An anthranilate-binding site is contributed by asparagine 110. Position 165 (arginine 165) interacts with anthranilate. Positions 223 and 224 each coordinate Mg(2+).

It belongs to the anthranilate phosphoribosyltransferase family. As to quaternary structure, homodimer. The cofactor is Mg(2+).

It carries out the reaction N-(5-phospho-beta-D-ribosyl)anthranilate + diphosphate = 5-phospho-alpha-D-ribose 1-diphosphate + anthranilate. It participates in amino-acid biosynthesis; L-tryptophan biosynthesis; L-tryptophan from chorismate: step 2/5. Catalyzes the transfer of the phosphoribosyl group of 5-phosphorylribose-1-pyrophosphate (PRPP) to anthranilate to yield N-(5'-phosphoribosyl)-anthranilate (PRA). The sequence is that of Anthranilate phosphoribosyltransferase from Buchnera aphidicola subsp. Baizongia pistaciae (strain Bp).